The following is a 531-amino-acid chain: Laccase-4 (531 aa).

The signal sequence occupies residues 1-19 (MLSSITLLPLLAAVSTPAF). Plastocyanin-like domains follow at residues 23 to 146 (RNYK…LVIY), 158 to 315 (VDDA…LHYE), and 384 to 507 (SLPT…VSSR). N-linked (GlcNAc...) asparagine glycosylation occurs at Asn-66. Positions 83 and 85 each coordinate Cu cation. A disulfide bond links Cys-104 and Cys-528. Residue Asn-109 is glycosylated (N-linked (GlcNAc...) asparagine). Residues His-128 and His-130 each contribute to the Cu cation site. Residues Asn-186, Asn-231, Asn-280, and Asn-395 are each glycosylated (N-linked (GlcNAc...) asparagine). Cu cation contacts are provided by His-427, His-430, His-432, His-479, Cys-480, and His-481.

Belongs to the multicopper oxidase family. In terms of assembly, homodimer. The cofactor is Cu cation. In mycelia, at a higher level than LCC1, LCC2 and LCC3.

The protein resides in the secreted. The enzyme catalyses 4 hydroquinone + O2 = 4 benzosemiquinone + 2 H2O. In terms of biological role, lignin degradation and detoxification of lignin-derived products. This Thanatephorus cucumeris (Black scurf of potato) protein is Laccase-4 (LCC4).